The following is a 364-amino-acid chain: Phosrestin-2 (364 aa).

The protein belongs to the arrestin family. Phosphorylated, but does not undergo light-induced phosphorylation. As to expression, expressed specifically and abundantly in photoreceptor cells in retina and ocelli.

The protein localises to the cell projection. It localises to the rhabdomere. Functionally, regulates photoreceptor cell deactivation. Arr1 and Arr2 proteins are mediators of rhodopsin inactivation and are essential for the termination of the phototransduction cascade. Involved in regulating normal cycles of per nuclear accumulation in brain circadian neurons and thus is important for normal circadian behavior. In the dark, functions with Arr2 to promote the formation of cytosolic Bdbt foci, which are required for dco localization to photoreceptor nuclei where it phosphorylates and activates degradation of per. This is Phosrestin-2 (Arr1) from Drosophila melanogaster (Fruit fly).